The chain runs to 376 residues: Phytanoyl-CoA hydroxylase-interacting protein-like (376 aa).

Residues 52 to 161 (VPHNIKISNI…EIIEFCTADY (110 aa)) form the Fibronectin type-III domain.

This sequence belongs to the PHYHIP family.

Functionally, may play a role in the development of the central system. This Xenopus laevis (African clawed frog) protein is Phytanoyl-CoA hydroxylase-interacting protein-like (phyhipl).